A 466-amino-acid chain; its full sequence is MPHSWDYDAVVIGSGPGGEGAAMGLVKQGARVAVIERYHNVGGGCTHWGTIPSKALRHAVSRIIEFNQNPLYSDHSRLLRSSFADILNHADNVINQQTRMRQGFYERNHCEILQGNAHFIDEHTLALECHDGTVETLTAEKFVIACGSRPYHPSDVDFSHPRIYDSDSILSLHHEPRHVIIYGAGVIGCEYASIFRGMDVKVDLINTRDRLLAFLDQEMSDSLSYHFWNSGVVIRHNEEYEKIEGCDDGVIMHLKSGKKLKADCLLYANGRTGNTDSLALENIGLETDSRGQLKVNSMYQTALPHVYAVGDVIGYPSLASAAYDQGRIAAQALVKGEATAHLIEDIPTGIYTIPEISSVGKTEQQLTAMKVPYEVGRAQFKHLARAQIVGMNVGTLKILFHRETKEILGIHCFGERAAEIIHIGQAIMEQKGGGNTIEYFVNTTFNYPTMAEAYRVAALNGLNRLF.

Residue 36–45 participates in FAD binding; that stretch reads ERYHNVGGGC.

The protein belongs to the class-I pyridine nucleotide-disulfide oxidoreductase family. The cofactor is FAD.

The protein resides in the cytoplasm. The catalysed reaction is NAD(+) + NADPH = NADH + NADP(+). In terms of biological role, conversion of NADPH, generated by peripheral catabolic pathways, to NADH, which can enter the respiratory chain for energy generation. This chain is Soluble pyridine nucleotide transhydrogenase, found in Salmonella paratyphi C (strain RKS4594).